The chain runs to 139 residues: Large ribosomal subunit protein uL16 (139 aa).

A compositionally biased stretch (basic residues) spans 1-16; that stretch reads MLIPRRVKHRKQHHPG. The segment at 1-25 is disordered; it reads MLIPRRVKHRKQHHPGRSGQATGGT.

Belongs to the universal ribosomal protein uL16 family. As to quaternary structure, part of the 50S ribosomal subunit.

Binds 23S rRNA and is also seen to make contacts with the A and possibly P site tRNAs. This is Large ribosomal subunit protein uL16 from Leifsonia xyli subsp. xyli (strain CTCB07).